Here is a 104-residue protein sequence, read N- to C-terminus: MAAKIRRNDEVIVLTGKDKGKKGKITKVLATGKVIVEGINLVKKHQKPVPAMGVQGGIVEQEAAIDVSNVAIFNAETGKADRVGFRFEDDKKVRFFKSNSVTIK.

Belongs to the universal ribosomal protein uL24 family. As to quaternary structure, part of the 50S ribosomal subunit.

In terms of biological role, one of two assembly initiator proteins, it binds directly to the 5'-end of the 23S rRNA, where it nucleates assembly of the 50S subunit. One of the proteins that surrounds the polypeptide exit tunnel on the outside of the subunit. The chain is Large ribosomal subunit protein uL24 from Photobacterium profundum (strain SS9).